The following is a 114-amino-acid chain: Non-specific lipid-transfer protein 2 (114 aa).

An N-terminal signal peptide occupies residues 1–23 (MEMVNKIACFVLLCMVVVAPHAE). Disulfide bonds link Cys-27-Cys-73, Cys-37-Cys-50, Cys-51-Cys-96, and Cys-71-Cys-110.

It belongs to the plant LTP family.

Plant non-specific lipid-transfer proteins transfer phospholipids as well as galactolipids across membranes. May play a role in wax or cutin deposition in the cell walls of expanding epidermal cells and certain secretory tissues. The chain is Non-specific lipid-transfer protein 2 (LTP2) from Solanum pennellii (Tomato).